A 323-amino-acid polypeptide reads, in one-letter code: Glyoxylate/hydroxypyruvate reductase HPR3 (323 aa).

NADP(+)-binding positions include 160–163 (LGSI), 182–184 (SRS), and 238–240 (VGR). Residues arginine 240 and glutamate 269 contribute to the active site. Histidine 287 (proton donor) is an active-site residue. Residue 287-289 (HFA) participates in NADP(+) binding.

This sequence belongs to the D-isomer specific 2-hydroxyacid dehydrogenase family. GyaR subfamily. Homodimer.

It catalyses the reaction glycolate + NADP(+) = glyoxylate + NADPH + H(+). The catalysed reaction is (R)-glycerate + NADP(+) = 3-hydroxypyruvate + NADPH + H(+). With respect to regulation, inhibited by oxalate. Its function is as follows. Catalyzes the NADPH-dependent reduction of glyoxylate and hydroxypyruvate (HP) into glycolate and glycerate. Mostly active in the presence of NADPH and glyoxylate. This chain is Glyoxylate/hydroxypyruvate reductase HPR3 (HPR3), found in Arabidopsis thaliana (Mouse-ear cress).